A 201-amino-acid chain; its full sequence is Imidazoleglycerol-phosphate dehydratase (201 aa).

It belongs to the imidazoleglycerol-phosphate dehydratase family.

It localises to the cytoplasm. It carries out the reaction D-erythro-1-(imidazol-4-yl)glycerol 3-phosphate = 3-(imidazol-4-yl)-2-oxopropyl phosphate + H2O. It participates in amino-acid biosynthesis; L-histidine biosynthesis; L-histidine from 5-phospho-alpha-D-ribose 1-diphosphate: step 6/9. This is Imidazoleglycerol-phosphate dehydratase from Prochlorococcus marinus (strain MIT 9301).